The chain runs to 193 residues: dTTP/UTP pyrophosphatase (193 aa).

Asp77 functions as the Proton acceptor in the catalytic mechanism.

This sequence belongs to the Maf family. YhdE subfamily. The cofactor is a divalent metal cation.

The protein resides in the cytoplasm. It carries out the reaction dTTP + H2O = dTMP + diphosphate + H(+). The enzyme catalyses UTP + H2O = UMP + diphosphate + H(+). Functionally, nucleoside triphosphate pyrophosphatase that hydrolyzes dTTP and UTP. May have a dual role in cell division arrest and in preventing the incorporation of modified nucleotides into cellular nucleic acids. The chain is dTTP/UTP pyrophosphatase from Bacteroides thetaiotaomicron (strain ATCC 29148 / DSM 2079 / JCM 5827 / CCUG 10774 / NCTC 10582 / VPI-5482 / E50).